We begin with the raw amino-acid sequence, 281 residues long: Urease accessory protein UreD 2 (281 aa).

This sequence belongs to the UreD family. In terms of assembly, ureD, UreF and UreG form a complex that acts as a GTP-hydrolysis-dependent molecular chaperone, activating the urease apoprotein by helping to assemble the nickel containing metallocenter of UreC. The UreE protein probably delivers the nickel.

It is found in the cytoplasm. Required for maturation of urease via the functional incorporation of the urease nickel metallocenter. The sequence is that of Urease accessory protein UreD 2 from Pseudomonas syringae pv. syringae (strain B728a).